A 112-amino-acid polypeptide reads, in one-letter code: UPF0102 protein THEYE_A1950 (112 aa).

It belongs to the UPF0102 family.

The protein is UPF0102 protein THEYE_A1950 of Thermodesulfovibrio yellowstonii (strain ATCC 51303 / DSM 11347 / YP87).